Consider the following 175-residue polypeptide: NADH-ubiquinone oxidoreductase chain 6 (175 aa).

5 helical membrane-spanning segments follow: residues 1 to 21, 25 to 45, 47 to 67, 88 to 108, and 149 to 169; these read MVTYIVFVLSIIFVISFVGVS, SPIYGGLGLIVGGGAGCGVVL, FGGSFLGLMVFLIYLGGMLVV, VVLGAFILGLVVESLIVIYAL, and YGVWLVIVTGWSLFVSVVIIM.

Belongs to the complex I subunit 6 family. Core subunit of respiratory chain NADH dehydrogenase (Complex I) which is composed of 45 different subunits.

It localises to the mitochondrion inner membrane. It catalyses the reaction a ubiquinone + NADH + 5 H(+)(in) = a ubiquinol + NAD(+) + 4 H(+)(out). Its function is as follows. Core subunit of the mitochondrial membrane respiratory chain NADH dehydrogenase (Complex I) which catalyzes electron transfer from NADH through the respiratory chain, using ubiquinone as an electron acceptor. Essential for the catalytic activity and assembly of complex I. The polypeptide is NADH-ubiquinone oxidoreductase chain 6 (MT-ND6) (Balaenoptera musculus (Blue whale)).